The sequence spans 118 residues: Large ribosomal subunit protein bL19 (118 aa).

This sequence belongs to the bacterial ribosomal protein bL19 family.

Its function is as follows. This protein is located at the 30S-50S ribosomal subunit interface and may play a role in the structure and function of the aminoacyl-tRNA binding site. This Levilactobacillus brevis (strain ATCC 367 / BCRC 12310 / CIP 105137 / JCM 1170 / LMG 11437 / NCIMB 947 / NCTC 947) (Lactobacillus brevis) protein is Large ribosomal subunit protein bL19.